The primary structure comprises 145 residues: Histone H3-like centromeric protein A (145 aa).

Positions 1–19 (MPRHTSAHKRKPSTPRRRS) are enriched in basic residues. The segment at 1–54 (MPRHTSAHKRKPSTPRRRSPPASLPPPAGSRTRRHSGPSGSSPRKKHKFRPGTR) is disordered. Ser-19 carries the post-translational modification Phosphoserine. The interval 51–145 (PGTRALMEIR…ARRIRGVEHM (95 aa)) is H3-like.

It belongs to the histone H3 family. As to quaternary structure, component of centromeric nucleosomes, where DNA is wrapped around a histone octamer core. The octamer contains two molecules each of H2A, H2B, CENPA and H4 assembled in one CENPA-H4 heterotetramer and two H2A-H2B heterodimers. CENPA modulates the DNA-binding characteristics of nucleosomes so that protruding DNA ends have higher flexibility than in nucleosomes containing conventional histone H3.

It localises to the nucleus. The protein resides in the chromosome. It is found in the centromere. Functionally, histone H3-like nucleosomal protein that is specifically found in centromeric nucleosomes. Replaces conventional H3 in the nucleosome core of centromeric chromatin that serves as an assembly site for the inner kinetochore. The presence of CENPA subtly modifies the nucleosome structure and the way DNA is wrapped around the nucleosome and gives rise to protruding DNA ends that are less well-ordered and rigid compared to nucleosomes containing histone H3. May serve as an epigenetic mark that propagates centromere identity through replication and cell division. Required for recruitment and assembly of kinetochore proteins, and as a consequence required for progress through mitosis, chromosome segregation and cytokinesis. This Danio rerio (Zebrafish) protein is Histone H3-like centromeric protein A (cenpa).